Here is a 625-residue protein sequence, read N- to C-terminus: Ankyrin repeat domain-containing protein oryK (625 aa).

ANK repeat units follow at residues 1–27 (MDIY…DVDG), 31–60 (DGKT…GRGP), 62–89 (NPSL…NAER), 90–119 (EHRS…EYQD), 162–195 (FFDY…DVNC), 202–232 (QFET…DLTI), 500–530 (DTRC…NVNF), 534–562 (SDRT…DIDL), and 568–598 (EGRT…DFSI).

The protein operates within secondary metabolite biosynthesis. In terms of biological role, ankyrin repeat domain-containing protein; part of the gene cluster that mediates the biosynthesis of oryzines, natural products with an unusual maleidride backbone. The two subunits of the fungal fatty acid synthase oryfasA and oryfasB probably form octenoic acid. This fatty acid is most likely activated by the acyl-CoA ligase oryP to give octenyl-CoA before the citrate synthase-like protein oryE catalyzes condensation with oxaloacetate to form tricarboxylic acid. The next steps of the pathways are conjectural, but a favorite possible route has been proposed, beginning with decarboxylation and concomitant dehydration by the decarboxylase oryM, followed by tautomerization, which may lead to the production of a diene intermediate. Reduction of this diene intermediate could give the known metabolite piliformic acid. On the pathway to oryzine B and oryzine A, however, hydroxylation of the diene by the alpha-ketoglutarate-dependent dioxygenase oryG and lactonisation by the lactonohydrolases oryH or oryL could give oryzine B directly. Finally, enoyl reduction by the dehydrogenase oryD would then convert oryzine B into oryzine A. This chain is Ankyrin repeat domain-containing protein oryK, found in Aspergillus oryzae (strain ATCC 42149 / RIB 40) (Yellow koji mold).